The primary structure comprises 319 residues: Putative binding protein BAB2_1146 (319 aa).

The first 22 residues, 1 to 22, serve as a signal peptide directing secretion; that stretch reads MKRRTFLAMSLALTFLPSVALA.

Belongs to the bacterial solute-binding protein SsuA/TauA family. In terms of assembly, the complex is composed of two ATP-binding proteins (BAB2_1147), two transmembrane proteins (BAB2_1148) and a solute-binding protein (BAB2_1146).

Its subcellular location is the periplasm. Functionally, probably part of an ABC transporter complex. The sequence is that of Putative binding protein BAB2_1146 from Brucella abortus (strain 2308).